The following is a 599-amino-acid chain: MTDLAHIRNFSIVAHIDHGKSTLADRLIQETGTVQDRDMKEQLLDAMDIERERGITIKANTVRIDYTADDGQAYVLNLIDTPGHVDFAYEVSRSMRAVEGSLLVVDSTQGVEAQTLANVYQAIDADHEIVPILNKIDLPASECDRVAEQIEDVIGIDASGAIRVSAKTGVGIHETLEAIVKHLPAPKGTRDAPLKAMLVDSWYDSYLGVIVLVRIMDGVLKKGMRVKFMSNGTLHHVDRIGVFRPAMQMIDSLGPGEIGFLTASIKQVRDTRVGDTITNDRNGTEVALPGFKPAQPVVFCGLFPVDSAEFEDLRDAIEKLALNDASFSYEMETSAALGFGFRCGFLGLLHLEVIRDRLEREYDIELITTAPSVVYHVFMKDGEMRELHNPADMPDLSKVDHIEEPRIKATILVPDEYLGDVLKLCQDRRGIQQDLSYAGSRAMVVYDLPLNEVVFDFYDRLKSVTKGYASFDYQLTGYREDSLVKMSILVNDEPVDALSTMVHRDRAEARGRAMCEKLKDLIPRHMFKIPIQAAIGGKVIARETLSALRKDVTAKCYGGDATRKRKLLDKQKAGKKKMRQFGKVDIPQEAFISALKMDS.

The tr-type G domain occupies Ala-5–Lys-187. Residues Asp-17–Thr-22 and Asn-134–Asp-137 contribute to the GTP site.

This sequence belongs to the TRAFAC class translation factor GTPase superfamily. Classic translation factor GTPase family. LepA subfamily.

It localises to the cell inner membrane. It catalyses the reaction GTP + H2O = GDP + phosphate + H(+). Functionally, required for accurate and efficient protein synthesis under certain stress conditions. May act as a fidelity factor of the translation reaction, by catalyzing a one-codon backward translocation of tRNAs on improperly translocated ribosomes. Back-translocation proceeds from a post-translocation (POST) complex to a pre-translocation (PRE) complex, thus giving elongation factor G a second chance to translocate the tRNAs correctly. Binds to ribosomes in a GTP-dependent manner. The sequence is that of Elongation factor 4 from Ruegeria pomeroyi (strain ATCC 700808 / DSM 15171 / DSS-3) (Silicibacter pomeroyi).